A 555-amino-acid polypeptide reads, in one-letter code: Tau-cadinol synthase (555 aa).

Residues R270, D307, D311, R448, and D451 each coordinate (2E,6E)-farnesyl diphosphate. Mg(2+) is bound by residues D307 and D311. A DDXXD motif motif is present at residues 307-311 (DDTYD). The Mg(2+) site is built by D451, S455, and E459.

This sequence belongs to the terpene synthase family. Mg(2+) is required as a cofactor.

The catalysed reaction is (2E,6E)-farnesyl diphosphate + H2O = tau-cadinol + diphosphate. The enzyme catalyses (2E,6E)-farnesyl diphosphate = (+)-gamma-cadinene + diphosphate. It participates in secondary metabolite biosynthesis; terpenoid biosynthesis. Sesquiterpene synthase that catalyzes the formation of sesquiterpenes and sesquiterpenoid alcohols. Converts farnesyl diphosphate (FPP) to tau-cadinol. Converts FPP to gamma-cadinene. Tau-cadinol is the major product. The chain is Tau-cadinol synthase from Lavandula angustifolia (Lavender).